Here is a 75-residue protein sequence, read N- to C-terminus: Small ribosomal subunit protein bS18 (75 aa).

Belongs to the bacterial ribosomal protein bS18 family. In terms of assembly, part of the 30S ribosomal subunit. Forms a tight heterodimer with protein bS6.

Its function is as follows. Binds as a heterodimer with protein bS6 to the central domain of the 16S rRNA, where it helps stabilize the platform of the 30S subunit. In Chromobacterium violaceum (strain ATCC 12472 / DSM 30191 / JCM 1249 / CCUG 213 / NBRC 12614 / NCIMB 9131 / NCTC 9757 / MK), this protein is Small ribosomal subunit protein bS18.